Consider the following 299-residue polypeptide: Small ribosomal subunit biogenesis GTPase RsgA (299 aa).

The region spanning C73 to P232 is the CP-type G domain. GTP-binding positions include T122 to D125 and G174 to S182. Residues C257, C262, H264, and C270 each coordinate Zn(2+).

Belongs to the TRAFAC class YlqF/YawG GTPase family. RsgA subfamily. As to quaternary structure, monomer. Associates with 30S ribosomal subunit, binds 16S rRNA. Zn(2+) is required as a cofactor.

It is found in the cytoplasm. Its function is as follows. One of several proteins that assist in the late maturation steps of the functional core of the 30S ribosomal subunit. Helps release RbfA from mature subunits. May play a role in the assembly of ribosomal proteins into the subunit. Circularly permuted GTPase that catalyzes slow GTP hydrolysis, GTPase activity is stimulated by the 30S ribosomal subunit. The protein is Small ribosomal subunit biogenesis GTPase RsgA of Parasynechococcus marenigrum (strain WH8102).